The primary structure comprises 255 residues: Large ribosomal subunit protein uL4 (255 aa).

This sequence belongs to the universal ribosomal protein uL4 family. As to quaternary structure, part of the 50S ribosomal subunit.

In terms of biological role, one of the primary rRNA binding proteins, this protein initially binds near the 5'-end of the 23S rRNA. It is important during the early stages of 50S assembly. It makes multiple contacts with different domains of the 23S rRNA in the assembled 50S subunit and ribosome. Functionally, forms part of the polypeptide exit tunnel. The chain is Large ribosomal subunit protein uL4 from Thermococcus onnurineus (strain NA1).